Reading from the N-terminus, the 95-residue chain is MIRSELIQKISEENPHLFQRDVERIVNTVFEEIIDAMARGDRVELRGFGAFSVKKRDARQGRNPRTGETVSVDEKHVPFFKTGKLLRERLNGLDE.

The protein belongs to the bacterial histone-like protein family. As to quaternary structure, heterodimer of an alpha and a beta chain.

Its function is as follows. This protein is one of the two subunits of integration host factor, a specific DNA-binding protein that functions in genetic recombination as well as in transcriptional and translational control. The protein is Integration host factor subunit beta of Paracoccus denitrificans (strain Pd 1222).